Reading from the N-terminus, the 21-residue chain is Venom nerve growth factor Bco12 (21 aa).

The protein belongs to the NGF-beta family. As to quaternary structure, homodimer; non-covalently linked. Post-translationally, glycosylated. As to expression, expressed by the venom gland.

It is found in the secreted. In terms of biological role, nerve growth factor is important for the development and maintenance of the sympathetic and sensory nervous systems. It stimulates division and differentiation of sympathetic and embryonic sensory neurons as well as basal forebrain cholinergic neurons in the brain. Its relevance in the snake venom is not clear. However, it has been shown to inhibit metalloproteinase-dependent proteolysis of platelet glycoprotein Ib alpha, suggesting a metalloproteinase inhibition to prevent metalloprotease autodigestion and/or protection against prey proteases. Binds a lipid between the two protein chains in the homodimer. The lipid-bound form promotes histamine relase from mouse mast cells, contrary to the lipid-free form. The protein is Venom nerve growth factor Bco12 of Bothrops cotiara (Cotiara).